Reading from the N-terminus, the 305-residue chain is MKHLNIYIMLLGFSIFTGATFNLAKYTVGYFSPSSSAAWRFGLAAAVMLIILIFTEGIKKSQLRKNAVSYIVLGIIGIFGFNALFFVGLKYTSPVNGALIMGLNPLLTAILARIILKDNMTKKQVLGIFFAFIGVLLVITQGSIETIKTLSISGGDLIIFTGNVCWALYGVLGRRFVKDGTPLSTTTYTMVIGAVSLIVVSLFTSKPVSLSNIPIGVWGAIAFMAFFTSVLGYLWWNQGIKEIGASKTSLFFNLVPVVTMIISFAVGTPIKVFQVIGAVLVILGVLTASGVIRIPKYNTKEQSAI.

A run of 10 helical transmembrane segments spans residues 4-24 (LNIY…FNLA), 38-58 (AWRF…TEGI), 67-87 (AVSY…LFFV), 95-115 (VNGA…ARII), 125-145 (VLGI…GSIE), 152-172 (ISGG…YGVL), 183-203 (LSTT…VSLF), 215-235 (IGVW…GYLW), 250-270 (LFFN…GTPI), and 272-292 (VFQV…SGVI). 2 consecutive EamA domains span residues 15-140 (IFTG…LVIT) and 164-290 (VCWA…TASG).

It belongs to the EamA transporter family.

The protein resides in the cell membrane. This is an uncharacterized protein from Bacillus subtilis (strain 168).